The sequence spans 425 residues: 2-oxoglutarate and iron-dependent oxygenase JMJD4 (425 aa).

Positions 141–300 (SRAFPEQDVY…IMWCFLQDEL (160 aa)) constitute a JmjC domain. Fe cation-binding residues include histidine 188, aspartate 190, and histidine 268.

The protein belongs to the JMJD6 family. Requires Fe(2+) as cofactor.

The protein resides in the cytoplasm. The catalysed reaction is L-lysyl-[protein] + 2-oxoglutarate + O2 = 4-hydroxy-L-lysyl-[protein] + succinate + CO2. Catalyzes the 2-oxoglutarate and iron-dependent C4-lysyl hydroxylation of ETF1 at 'Lys-63' thereby promoting the translational termination efficiency of ETF1. The polypeptide is 2-oxoglutarate and iron-dependent oxygenase JMJD4 (JMJD4) (Gallus gallus (Chicken)).